A 706-amino-acid chain; its full sequence is Gamma-adducin (706 aa).

Residues 1-10 (MSSDASQGVI) are compositionally biased toward polar residues. Positions 1 to 20 (MSSDASQGVITTPPPPSMPH) are disordered. An N-acetylserine modification is found at Ser-2. A phosphoserine mark is found at Ser-42, Ser-64, Ser-402, Ser-414, Ser-423, Ser-442, and Ser-461. Disordered stretches follow at residues 471-497 (AEDS…LNTN), 535-555 (PSTM…NPFS), 575-610 (GLED…KLEE), and 666-706 (EKIE…KVEA). A Glycyl lysine isopeptide (Lys-Gly) (interchain with G-Cter in SUMO2) cross-link involves residue Lys-484. Residues Ser-585, Ser-590, Ser-673, Ser-677, Ser-679, Ser-681, and Ser-683 each carry the phosphoserine modification. Residues 589-602 (SSVSQIQSQTQSPQ) are compositionally biased toward low complexity. The span at 682–706 (PSKKKKKFRTPSFLKKNKKKEKVEA) shows a compositional bias: basic residues. The tract at residues 684–701 (KKKKKFRTPSFLKKNKKK) is interaction with calmodulin.

Belongs to the aldolase class II family. Adducin subfamily. As to quaternary structure, heterodimer of an alpha and a gamma subunit. Sumoylated. Post-translationally, proteolytically cleaved by asparagine endopeptidase (AEP) into 2 fragments. Overexpression of the 1-357 fragment induces neuronal apoptosis, and overexpression of either 1-357 or 358-706 fragment increases the degeneration of dendritic spines. Overexpression of the 1-357 fragment impairs neurite outgrowth by downregulating the expression of Rac2, and induces synaptic dysfunction and cognitive impairments in tau P301S transgenic mice, a mouse model for Alzheimer disease (AD). In terms of tissue distribution, ubiquitously expressed. Cleavage fragment 1-357 is abundantly expressed in the brain of patients with Alzheimer disease (AD), but hardly detectable in age-matched control individuals (at protein level).

It localises to the cytoplasm. Its subcellular location is the cytoskeleton. It is found in the cell membrane. In terms of biological role, membrane-cytoskeleton-associated protein that promotes the assembly of the spectrin-actin network. Plays a role in actin filament capping. Binds to calmodulin. Involved in myogenic reactivity of the renal afferent arteriole (Af-art), renal interlobular arteries and middle cerebral artery (MCA) to increased perfusion pressure. Involved in regulation of potassium channels in the vascular smooth muscle cells (VSMCs) of the Af-art and MCA ex vivo. Involved in regulation of glomerular capillary pressure, glomerular filtration rate (GFR) and glomerular nephrin expression in response to hypertension. Involved in renal blood flow (RBF) autoregulation. Plays a role in podocyte structure and function. Regulates globular monomer actin (G-actin) and filamentous polymer actin (F-actin) ratios in the primary podocytes affecting actin cytoskeleton organization. Regulates expression of synaptopodin, RhoA, Rac1 and CDC42 in the renal cortex and the primary podocytes. Regulates expression of nephrin in the glomeruli and in the primary podocytes, expression of nephrin and podocinin in the renal cortex, and expression of focal adhesion proteins integrin alpha-3 and integrin beta-1 in the glomeruli. Involved in cell migration and cell adhesion of podocytes, and in podocyte foot process effacement. Regulates expression of profibrotics markers MMP2, MMP9, TGF beta-1, tubular tight junction protein E-cadherin, and mesenchymal markers vimentin and alpha-SMA. Promotes the growth of neurites. The protein is Gamma-adducin (ADD3) of Homo sapiens (Human).